The following is a 227-amino-acid chain: N-acetyltransferase family 8 member 7 (227 aa).

Transmembrane regions (helical) follow at residues 36–56 (MLLL…LFLA) and 58–78 (GSWL…WFLA). The 160-residue stretch at 61 to 220 (LLVLLSILTL…PMINLKYSLT (160 aa)) folds into the N-acetyltransferase domain.

The protein belongs to the camello family.

It is found in the membrane. The catalysed reaction is L-lysyl-[protein] + acetyl-CoA = N(6)-acetyl-L-lysyl-[protein] + CoA + H(+). Its function is as follows. Has histone acetyltransferase activity in vitro, with specificity for histone H4. In Mus musculus (Mouse), this protein is N-acetyltransferase family 8 member 7.